We begin with the raw amino-acid sequence, 46 residues long: Protein krueppel (46 aa).

3 consecutive C2H2-type zinc fingers follow at residues methionine 1 to histidine 4, tyrosine 10 to histidine 32, and tyrosine 38 to arginine 46.

It belongs to the krueppel C2H2-type zinc-finger protein family.

The protein resides in the nucleus. Krueppel is a gap class segmentation protein. The chain is Protein krueppel (Kr) from Pholcus phalangioides (Longbodied cellar spider).